We begin with the raw amino-acid sequence, 81 residues long: Large ribosomal subunit protein bL28 (81 aa).

The protein belongs to the bacterial ribosomal protein bL28 family. As to quaternary structure, part of the 50S ribosomal subunit.

This is Large ribosomal subunit protein bL28 from Deinococcus radiodurans (strain ATCC 13939 / DSM 20539 / JCM 16871 / CCUG 27074 / LMG 4051 / NBRC 15346 / NCIMB 9279 / VKM B-1422 / R1).